A 156-amino-acid chain; its full sequence is ATP synthase subunit b (156 aa).

The helical transmembrane segment at Leu7–Pro27 threads the bilayer.

The protein belongs to the ATPase B chain family. In terms of assembly, F-type ATPases have 2 components, F(1) - the catalytic core - and F(0) - the membrane proton channel. F(1) has five subunits: alpha(3), beta(3), gamma(1), delta(1), epsilon(1). F(0) has three main subunits: a(1), b(2) and c(10-14). The alpha and beta chains form an alternating ring which encloses part of the gamma chain. F(1) is attached to F(0) by a central stalk formed by the gamma and epsilon chains, while a peripheral stalk is formed by the delta and b chains.

It localises to the cell inner membrane. Its function is as follows. F(1)F(0) ATP synthase produces ATP from ADP in the presence of a proton or sodium gradient. F-type ATPases consist of two structural domains, F(1) containing the extramembraneous catalytic core and F(0) containing the membrane proton channel, linked together by a central stalk and a peripheral stalk. During catalysis, ATP synthesis in the catalytic domain of F(1) is coupled via a rotary mechanism of the central stalk subunits to proton translocation. Component of the F(0) channel, it forms part of the peripheral stalk, linking F(1) to F(0). This Paracidovorax citrulli (strain AAC00-1) (Acidovorax citrulli) protein is ATP synthase subunit b.